An 89-amino-acid polypeptide reads, in one-letter code: Myrmicitoxin(1)-Pr2a (89 aa).

A signal peptide spans 1–23 (MEIPKLLYIAVIAIGLSGSLTCA). Residues 24–61 (TPLANPWADPEAEANPEAKAIAEATAEAIAEALAEPEP) constitute a propeptide that is removed on maturation. N88 is subject to Asparagine amide.

It belongs to the formicidae venom clade 1 family. In terms of tissue distribution, expressed by the venom gland.

Its subcellular location is the secreted. Functionally, vertebrate-selective toxin that causes pain by targeting voltage-gated sodium channels. The sequence is that of Myrmicitoxin(1)-Pr2a from Pogonomyrmex rugosus (Desert harvester ant).